Here is a 155-residue protein sequence, read N- to C-terminus: Large ribosomal subunit protein uL16m (155 aa).

This sequence belongs to the universal ribosomal protein uL16 family.

It localises to the mitochondrion. In Petunia hybrida (Petunia), this protein is Large ribosomal subunit protein uL16m (RPL16).